The chain runs to 346 residues: MTTNTVTLQTAHIVSLGDIEEAKASIKPFIRRTPLIKSMYLSQSITKGNVFLKLENMQFTGSFKFRGASNKINHLTDEQKEKGIIAASAGNHAQGVALTAKLLGIDATIVMPETAPQAKQQATKGYGAKVILKGKNFNETRLYMEELAKENGMTIVHPYDDKFVMAGQGTIGLEILDDIWNVNTVIVPVGGGGLIAGIATALKSFNPSIHIIGVQSENVHGMAESFYKRDLTEHRVDSTIADGCDVKVPGEQTYEVVKHLVDEFILVTEEEIEHAMKDLMQRAKIITEGAGALPTAAILSGKINNKWLEDKNVVALVSGGNVDLTRVSGVIEHGLNIADTSKGVVG.

59-60 (FT) contacts AMP. An N6-(pyridoxal phosphate)lysine modification is found at Lys64. Residues Gln94, 125–126 (GY), and Asn321 contribute to the AMP site.

Belongs to the serine/threonine dehydratase family. As to quaternary structure, in the native structure, TdcB is in a dimeric form, whereas in the TdcB-AMP complex, it exists in a tetrameric form (dimer of dimers). The cofactor is pyridoxal 5'-phosphate.

It catalyses the reaction L-threonine = 2-oxobutanoate + NH4(+). Its pathway is amino-acid degradation; L-threonine degradation via propanoate pathway; propanoate from L-threonine: step 1/4. With respect to regulation, each protein molecule can bind up to four molecules of AMP, which act as an allosteric activator to the enzyme. Functionally, catalyzes the anaerobic formation of alpha-ketobutyrate and ammonia from threonine in a two-step reaction. The first step involved a dehydration of threonine and a production of enamine intermediates (aminocrotonate), which tautomerizes to its imine form (iminobutyrate). Both intermediates are unstable and short-lived. The second step is the nonenzymatic hydrolysis of the enamine/imine intermediates to form 2-ketobutyrate and free ammonia. In the low water environment of the cell, the second step is accelerated by RidA. The polypeptide is L-threonine dehydratase catabolic TdcB (tdcB) (Staphylococcus aureus (strain USA300)).